We begin with the raw amino-acid sequence, 126 residues long: Aspartate 1-decarboxylase (126 aa).

The active-site Schiff-base intermediate with substrate; via pyruvic acid is the Ser-25. At Ser-25 the chain carries Pyruvic acid (Ser). Thr-57 contributes to the substrate binding site. Tyr-58 (proton donor) is an active-site residue. 73 to 75 contributes to the substrate binding site; that stretch reads GAA.

It belongs to the PanD family. Heterooctamer of four alpha and four beta subunits. Requires pyruvate as cofactor. Post-translationally, is synthesized initially as an inactive proenzyme, which is activated by self-cleavage at a specific serine bond to produce a beta-subunit with a hydroxyl group at its C-terminus and an alpha-subunit with a pyruvoyl group at its N-terminus.

It localises to the cytoplasm. It carries out the reaction L-aspartate + H(+) = beta-alanine + CO2. It functions in the pathway cofactor biosynthesis; (R)-pantothenate biosynthesis; beta-alanine from L-aspartate: step 1/1. Functionally, catalyzes the pyruvoyl-dependent decarboxylation of aspartate to produce beta-alanine. This chain is Aspartate 1-decarboxylase, found in Edwardsiella ictaluri (strain 93-146).